We begin with the raw amino-acid sequence, 311 residues long: E3 ubiquitin-protein ligase RNF126 (311 aa).

An N-acetylalanine modification is found at A2. Residue S5 is modified to Phosphoserine. Residues 5–100 are required for interaction with BAG6; that stretch reads SPHPGRYFCH…FEIPTFPPGA (96 aa). The Zn(2+) site is built by C13, C16, C29, and C32. Residues 13–32 form a C4-type zinc finger; it reads CHCCSVEIVPRLPDYICPRC. Disordered regions lie at residues 42 to 64 and 94 to 132; these read EETR…SRPP and PTFP…ARLT. Residues 47-61 are compositionally biased toward polar residues; sequence TENGSAPSTAPTDQS. Over residues 103–116 the composition is skewed to basic and acidic residues; it reads DDGRDPESRRERDH. Residues 117 to 132 show a composition bias toward basic residues; the sequence is PSRHRYGARQPRARLT. The sufficient for interaction with AICDA stretch occupies residues 200-304; sequence TGPPPADKEK…SSSSSSSPSN (105 aa). The RING-type zinc-finger motif lies at 229–270; sequence CPVCKDDYALGERVRQLPCNHLFHDGCIVPWLEQHDSCPVCR. The segment at 277–311 is disordered; sequence NTATNPPGLTGVSFSSSSSSSSSSSPSNENATSNS. The span at 289–311 shows a compositional bias: low complexity; sequence SFSSSSSSSSSSSPSNENATSNS.

As to quaternary structure, interacts with CCDC50, EGFR, FLT3 and SCAMP3. Interacts with BAG6 (via ubiquitin-like domain); required for BAG6-dependent ubiquitination of proteins mislocalized to the cytosol. Interacts with CDKN1A. Interacts with AICDA. Ubiquitinated. May undergo autoubiquitination. Highly expressed in liver and testis.

The protein resides in the cytoplasm. It is found in the nucleus. It carries out the reaction S-ubiquitinyl-[E2 ubiquitin-conjugating enzyme]-L-cysteine + [acceptor protein]-L-lysine = [E2 ubiquitin-conjugating enzyme]-L-cysteine + N(6)-ubiquitinyl-[acceptor protein]-L-lysine.. Its pathway is protein modification; protein ubiquitination. Its function is as follows. E3 ubiquitin-protein ligase that mediates ubiquitination oF target proteins. Depending on the associated E2 ligase, mediates 'Lys-27'-, 'Lys-29'-, 'Lys-48'- and/or 'Lys-63'-linked polyubiquitination of substrates. Part of a BAG6-dependent quality control process ensuring that proteins of the secretory pathway that are mislocalized to the cytosol are degraded by the proteasome. Probably acts by providing the ubiquitin ligase activity associated with the BAG6 complex and be responsible for ubiquitination of the hydrophobic mislocalized proteins and their targeting to the proteasome. May also play a role in the endosomal recycling of IGF2R, the cation-independent mannose-6-phosphate receptor. May play a role in the endosomal sorting and degradation of several membrane receptors including EGFR, FLT3, MET and CXCR4, by mediating their ubiquitination. By ubiquitinating CDKN1A/p21 and targeting it for degradation, may also promote cell proliferation. May monoubiquitinate AICDA. Acts as a regulator of DNA repair by mediating 'Lys-27'- and 'Lys-29'-linked polyubiquitination of MRE11, thereby promoting the exonuclease activity of MRE11. The chain is E3 ubiquitin-protein ligase RNF126 from Homo sapiens (Human).